We begin with the raw amino-acid sequence, 339 residues long: tRNA (guanine-N(7)-)-methyltransferase (339 aa).

The disordered stretch occupies residues 1-20 (MTPPPAKRQKRNEYRKANTA). S-adenosyl-L-methionine-binding positions include Gly-94 and 117–118 (EI). The disordered stretch occupies residues 141–186 (RSSAIPSESSPAAQQPQQHHQQQLQATETAADAASPSSPDATGETL). Over residues 142–181 (SSAIPSESSPAAQQPQQHHQQQLQATETAADAASPSSPDA) the composition is skewed to low complexity. S-adenosyl-L-methionine is bound by residues 202-203 (NT) and Cys-222. Asp-225 is an active-site residue. 311–313 (TEE) contacts S-adenosyl-L-methionine.

The protein belongs to the class I-like SAM-binding methyltransferase superfamily. TrmB family. In terms of assembly, forms a complex with trm82.

Its subcellular location is the nucleus. It carries out the reaction guanosine(46) in tRNA + S-adenosyl-L-methionine = N(7)-methylguanosine(46) in tRNA + S-adenosyl-L-homocysteine. It participates in tRNA modification; N(7)-methylguanine-tRNA biosynthesis. Its function is as follows. Catalyzes the formation of N(7)-methylguanine at position 46 (m7G46) in tRNA. This is tRNA (guanine-N(7)-)-methyltransferase (trm8) from Aspergillus clavatus (strain ATCC 1007 / CBS 513.65 / DSM 816 / NCTC 3887 / NRRL 1 / QM 1276 / 107).